The sequence spans 138 residues: Putative pre-16S rRNA nuclease (138 aa).

The protein belongs to the YqgF nuclease family.

It localises to the cytoplasm. Its function is as follows. Could be a nuclease involved in processing of the 5'-end of pre-16S rRNA. This Escherichia coli O7:K1 (strain IAI39 / ExPEC) protein is Putative pre-16S rRNA nuclease.